A 256-amino-acid chain; its full sequence is MKNASVITVGNEILKGRTVNTNAAFIGNFLTYHGYQVRRGFVVMDDLDEIGWAFRVALEVSDLVVSSGGLGPTFDDMTVEGFAKCIGQDLRIDEDALAMIKKKYGQADLTPQRLKMAKIPPSCRPIENPVGTAPGLICAVGGKKVIILPGVPKEMEALLKAMEKDIIIPDTHYYDDSVIIADVMESAFAPYVDRIMKEFDGIYVKSHPRNVEVKNPELEIEISGFGEDEAALRKKIEDAIARAGEYAVKLGGSVKR.

The protein belongs to the CinA family.

The protein is Protein Ta0487 of Thermoplasma acidophilum (strain ATCC 25905 / DSM 1728 / JCM 9062 / NBRC 15155 / AMRC-C165).